A 330-amino-acid chain; its full sequence is Growth hormone-regulated TBC protein 6 (330 aa).

The 179-residue stretch at G78–G256 folds into the Rab-GAP TBC domain.

The protein is Growth hormone-regulated TBC protein 6 (tbc-6) of Caenorhabditis elegans.